The primary structure comprises 450 residues: Methionine aminopeptidase 2-2 (450 aa).

2 stretches are compositionally biased toward basic and acidic residues: residues 1 to 10 (MGAKISEDHP) and 30 to 39 (RGAHLSRDGD). Residues 1-100 (MGAKISEDHP…PPRVPLSELF (100 aa)) are disordered. Residues 47-56 (GDDDDDDDEG) are compositionally biased toward acidic residues. Residues 69–86 (KKKKKKRKPKKKKAKKAT) are compositionally biased toward basic residues. Histidine 211 serves as a coordination point for substrate. A divalent metal cation-binding residues include aspartate 232, aspartate 243, and histidine 302. Histidine 310 contributes to the substrate binding site. Residues glutamate 335 and glutamate 431 each contribute to the a divalent metal cation site.

Belongs to the peptidase M24A family. Methionine aminopeptidase eukaryotic type 2 subfamily. Requires Co(2+) as cofactor. The cofactor is Zn(2+). Mn(2+) serves as cofactor. It depends on Fe(2+) as a cofactor.

It is found in the cytoplasm. It catalyses the reaction Release of N-terminal amino acids, preferentially methionine, from peptides and arylamides.. Its function is as follows. Cotranslationally removes the N-terminal methionine from nascent proteins. The N-terminal methionine is often cleaved when the second residue in the primary sequence is small and uncharged (Met-Ala-, Cys, Gly, Pro, Ser, Thr, or Val). The polypeptide is Methionine aminopeptidase 2-2 (Fusarium vanettenii (strain ATCC MYA-4622 / CBS 123669 / FGSC 9596 / NRRL 45880 / 77-13-4) (Fusarium solani subsp. pisi)).